A 619-amino-acid chain; its full sequence is Chaperone protein HscA homolog (619 aa).

Belongs to the heat shock protein 70 family.

Chaperone involved in the maturation of iron-sulfur cluster-containing proteins. Has a low intrinsic ATPase activity which is markedly stimulated by HscB. In Haemophilus influenzae (strain PittGG), this protein is Chaperone protein HscA homolog.